Consider the following 555-residue polypeptide: F-box only protein 33 (555 aa).

The region spanning A65 to L111 is the F-box domain.

In terms of assembly, part of the SCF (SKP1-CUL1-F-box) E3 ubiquitin-protein ligase complex SCF(FBXO33) formed of CUL1, SKP1, RBX1 and FBXO33. Interacts via its N-terminus with YBX1 CSD domain. Directly interacts with SKP1 and CUL1.

The protein operates within protein modification; protein ubiquitination. In terms of biological role, substrate recognition component of a SCF (SKP1-CUL1-F-box protein) E3 ubiquitin-protein ligase complex which mediates the ubiquitination and subsequent proteasomal degradation of target proteins. Probably recognizes and binds to phosphorylated target proteins. Recognizes YBX1. This Homo sapiens (Human) protein is F-box only protein 33 (FBXO33).